The sequence spans 80 residues: Small membrane A-kinase anchor protein (80 aa).

Gly2 carries N-myristoyl glycine lipidation.

The protein belongs to the small membrane AKAP family. May be palmitoylated at Cys-3.

Its subcellular location is the cell membrane. Its function is as follows. Binds to type I regulatory subunits of protein kinase A and may anchor/target them to the plasma membrane. This Tetraodon nigroviridis (Spotted green pufferfish) protein is Small membrane A-kinase anchor protein.